The primary structure comprises 148 residues: Ribonuclease H (148 aa).

An RNase H type-1 domain is found at 3 to 144 (DKEQVVIYTD…ADQLANRGVA (142 aa)). 4 residues coordinate Mg(2+): aspartate 12, glutamate 50, aspartate 72, and aspartate 136. Residues 125-148 (GHTGDPGNERADQLANRGVAELPR) are disordered.

The protein belongs to the RNase H family. Monomer. The cofactor is Mg(2+).

The protein localises to the cytoplasm. It carries out the reaction Endonucleolytic cleavage to 5'-phosphomonoester.. In terms of biological role, endonuclease that specifically degrades the RNA of RNA-DNA hybrids. The protein is Ribonuclease H of Pseudomonas aeruginosa (strain LESB58).